We begin with the raw amino-acid sequence, 401 residues long: Phosphonopyruvate decarboxylase (401 aa).

Residues 382–401 form a disordered region; the sequence is WPASAVGSGTRAAAGSAGDR. Residues 384-401 are compositionally biased toward low complexity; it reads ASAVGSGTRAAAGSAGDR.

It belongs to the TPP enzyme family. The cofactor is thiamine diphosphate. Mg(2+) is required as a cofactor.

The enzyme catalyses 3-phosphonopyruvate + H(+) = phosphonoacetaldehyde + CO2. It participates in secondary metabolite biosynthesis; bialaphos biosynthesis. In terms of biological role, involved in the biosynthesis of phosphinothricin tripeptide (PTT), also known as bialaphos (BA), a natural-product antibiotic and potent herbicide. Catalyzes the decarboxylation of phosphonopyruvate (PnPy) to generate phosphonoacetaldehyde (PnAA). The chain is Phosphonopyruvate decarboxylase from Streptomyces hygroscopicus.